The primary structure comprises 191 residues: Molybdenum cofactor guanylyltransferase (191 aa).

Residues 13-15 (LAG), K26, D72, and D102 contribute to the GTP site. D102 serves as a coordination point for Mg(2+).

The protein belongs to the MobA family. Monomer. Mg(2+) is required as a cofactor.

Its subcellular location is the cytoplasm. The enzyme catalyses Mo-molybdopterin + GTP + H(+) = Mo-molybdopterin guanine dinucleotide + diphosphate. Functionally, transfers a GMP moiety from GTP to Mo-molybdopterin (Mo-MPT) cofactor (Moco or molybdenum cofactor) to form Mo-molybdopterin guanine dinucleotide (Mo-MGD) cofactor. In Pseudomonas putida (strain ATCC 700007 / DSM 6899 / JCM 31910 / BCRC 17059 / LMG 24140 / F1), this protein is Molybdenum cofactor guanylyltransferase.